The sequence spans 221 residues: Ribosomal RNA small subunit methyltransferase G (221 aa).

S-adenosyl-L-methionine-binding positions include Gly-83, Phe-88, 132 to 133 (LE), and Arg-146.

Belongs to the methyltransferase superfamily. RNA methyltransferase RsmG family.

It is found in the cytoplasm. It carries out the reaction guanosine(527) in 16S rRNA + S-adenosyl-L-methionine = N(7)-methylguanosine(527) in 16S rRNA + S-adenosyl-L-homocysteine. Functionally, specifically methylates the N7 position of guanine in position 527 of 16S rRNA. The protein is Ribosomal RNA small subunit methyltransferase G of Zymomonas mobilis subsp. mobilis (strain ATCC 31821 / ZM4 / CP4).